The primary structure comprises 123 residues: SPbeta prophage-derived uncharacterized protein YorE (123 aa).

The chain is SPbeta prophage-derived uncharacterized protein YorE (yorE) from Bacillus subtilis (strain 168).